Reading from the N-terminus, the 429-residue chain is Enolase (429 aa).

(2R)-2-phosphoglycerate is bound at residue Q162. E204 (proton donor) is an active-site residue. Residues D241, E283, and D310 each contribute to the Mg(2+) site. (2R)-2-phosphoglycerate is bound by residues K335, R364, S365, and K386. K335 (proton acceptor) is an active-site residue.

The protein belongs to the enolase family. Requires Mg(2+) as cofactor.

The protein localises to the cytoplasm. Its subcellular location is the secreted. It localises to the cell surface. The catalysed reaction is (2R)-2-phosphoglycerate = phosphoenolpyruvate + H2O. It functions in the pathway carbohydrate degradation; glycolysis; pyruvate from D-glyceraldehyde 3-phosphate: step 4/5. Its function is as follows. Catalyzes the reversible conversion of 2-phosphoglycerate (2-PG) into phosphoenolpyruvate (PEP). It is essential for the degradation of carbohydrates via glycolysis. This is Enolase from Mycobacterium leprae (strain TN).